The primary structure comprises 122 residues: uncharacterized protein (122 aa).

T55 bears the Phosphothreonine mark. S72, S86, S96, S112, and S118 each carry phosphoserine.

It localises to the cytoplasm. This is an uncharacterized protein from Homo sapiens (Human).